Reading from the N-terminus, the 299-residue chain is Probable alpha-L-glutamate ligase (299 aa).

The ATP-grasp domain maps to 112 to 294 (LQLLTEQGIA…IALQMIVHIE (183 aa)). ATP-binding positions include K148, 185–186 (DF), D194, and 218–220 (RAN). Positions 255, 267, and 269 each coordinate Mg(2+). Residues D255, E267, and N269 each contribute to the Mn(2+) site.

It belongs to the RimK family. Requires Mg(2+) as cofactor. Mn(2+) serves as cofactor.

The protein is Probable alpha-L-glutamate ligase of Histophilus somni (strain 129Pt) (Haemophilus somnus).